The sequence spans 122 residues: MRHYEIVFIVHPDQSEQVPAMIERYKSTVTSQGGQVHRVEDWGRRQLAYMIQKLAKAHYVCLNIECGKETLAELEHAFKFNDAVLRHLIVQTKKAETAPSPMMKEVAREEAKKAAAQTEQAA.

Residues 99-122 (PSPMMKEVAREEAKKAAAQTEQAA) are disordered.

The protein belongs to the bacterial ribosomal protein bS6 family.

In terms of biological role, binds together with bS18 to 16S ribosomal RNA. This is Small ribosomal subunit protein bS6 from Ralstonia pickettii (strain 12J).